The following is a 160-amino-acid chain: MPSFDVVSEVDKHELSNAVDQANRELATRFDFKGTDAKFELEGFVVTQVAPSAFQLKQMLDILRGRLSARGIDVRCLEVADPLENLGGARQKVTVRQGIEQPVAKKLIAAIKGAKLKVESQINGDKLRISGKKRDDLQEVIALLRKTDVDLPLQYQNFRD.

It belongs to the YajQ family.

Functionally, nucleotide-binding protein. The sequence is that of Nucleotide-binding protein Bpet3698 from Bordetella petrii (strain ATCC BAA-461 / DSM 12804 / CCUG 43448).